Reading from the N-terminus, the 590-residue chain is Leucine-rich repeat transmembrane neuronal protein 4 (590 aa).

Residues M1–A30 form the signal peptide. The LRRNT domain maps to Q31–G61. The Extracellular segment spans residues Q31 to K424. N-linked (GlcNAc...) asparagine glycosylation is present at N58. LRR repeat units lie at residues G62–G83, Q86–G107, R110–P131, N134–G155, K158–D179, N182–G203, K206–P226, N230–T251, S254–C275, and N278–A299. N126 carries an N-linked (GlcNAc...) asparagine glycan. N-linked (GlcNAc...) asparagine glycosylation occurs at N291. The region spanning N311 to E362 is the LRRCT domain. Residues I425–V445 traverse the membrane as a helical segment. The Cytoplasmic segment spans residues S446–N590.

This sequence belongs to the LRRTM family. Peripherally associated with AMPAR complex. AMPAR complex consists of an inner core made of 4 pore-forming GluA/GRIA proteins (GRIA1, GRIA2, GRIA3 and GRIA4) and 4 major auxiliary subunits arranged in a twofold symmetry. One of the two pairs of distinct binding sites is occupied either by CNIH2, CNIH3 or CACNG2, CACNG3. The other harbors CACNG2, CACNG3, CACNG4, CACNG8 or GSG1L. This inner core of AMPAR complex is complemented by outer core constituents binding directly to the GluA/GRIA proteins at sites distinct from the interaction sites of the inner core constituents. Outer core constituents include at least PRRT1, PRRT2, CKAMP44/SHISA9, FRRS1L and NRN1. The proteins of the inner and outer core serve as a platform for other, more peripherally associated AMPAR constituents, including LRRTM4. Alone or in combination, these auxiliary subunits control the gating and pharmacology of the AMPAR complex and profoundly impact their biogenesis and protein processing. Expressed in neuronal tissues.

It is found in the cell membrane. The protein resides in the postsynaptic cell membrane. In terms of biological role, may play a role in the development and maintenance of the vertebrate nervous system. Exhibits strong synaptogenic activity, restricted to excitatory presynaptic differentiation. This is Leucine-rich repeat transmembrane neuronal protein 4 (LRRTM4) from Homo sapiens (Human).